Reading from the N-terminus, the 169-residue chain is Co-chaperone protein HscB homolog (169 aa).

One can recognise a J domain in the interval asparagine 2–leucine 74.

It belongs to the HscB family. Interacts with HscA and stimulates its ATPase activity.

Co-chaperone involved in the maturation of iron-sulfur cluster-containing proteins. Seems to help targeting proteins to be folded toward HscA. The sequence is that of Co-chaperone protein HscB homolog from Psychromonas ingrahamii (strain DSM 17664 / CCUG 51855 / 37).